Reading from the N-terminus, the 626-residue chain is Probable metalloendopeptidase G1-type (626 aa).

A Zn(2+)-binding site is contributed by histidine 42. The active site involves glutamate 45. Histidine 46 is a Zn(2+) binding site.

This sequence belongs to the peptidase M44 family. The cofactor is Zn(2+).

In terms of biological role, seems to be involved in viral proteins maturation by cleavage at Ala-Gly-|-Xaa motifs. This is Probable metalloendopeptidase G1-type from Fowlpox virus (strain NVSL) (FPV).